Here is a 1262-residue protein sequence, read N- to C-terminus: Separin homolog sep-1 (1262 aa).

The Peptidase C50 domain maps to 957–1051 (VQNAYYILDP…SVRTIPQALG (95 aa)). Cys1040 is an active-site residue. A disordered region spans residues 1147–1262 (KDQRNLPQTP…ARTPSRSRNL (116 aa)). Composition is skewed to polar residues over residues 1151–1162 (NLPQTPKTSART) and 1177–1197 (FVTS…NKSP). Over residues 1243–1262 (TPTTRTTRSSARTPSRSRNL) the composition is skewed to low complexity.

As to quaternary structure, forms a complex with securin-like protein ify-1 (via C-terminus). Interaction with ify-1 stabilizes sep-1. Also maintains the complex in the cytoplasm during interphase and recruits it to chromosomes during the first meiotic division. In terms of tissue distribution, expressed in oocytes. Expressed in male germline. Expressed in spermatocytes but undetectable in spermatids (at protein level).

It is found in the cytoplasm. The protein resides in the chromosome. Its subcellular location is the cytoplasmic granule. It localises to the cytoskeleton. The protein localises to the microtubule organizing center. It is found in the centrosome. The protein resides in the spindle. Its subcellular location is the cleavage furrow. It localises to the midbody. It catalyses the reaction All bonds known to be hydrolyzed by this endopeptidase have arginine in P1 and an acidic residue in P4. P6 is often occupied by an acidic residue or by a hydroxy-amino-acid residue, the phosphorylation of which enhances cleavage.. With respect to regulation, probably maintained in an inactive state via its interaction with securin ify-1 which acts as a pseudosubstrate thereby blocking access to the catalytic site. Upon ify-1 degradation at the onset of anaphase, sep-1 is likely to become active. In addition, interaction with ify-1 stabilizes sep-1. Cysteine protease, which plays a central role in homologous chromosome separation during meiosis I and in sister chromatid separation during embryonic mitosis. Promotes chromosome/sister chromatid segregation by cleaving the scc-1 (mitosis) and rec-8 (meiosis) subunits of the cohesin complex at the onset of anaphase. May cleave histone H3-like protein cpar-1 during meiosis I metaphase-anaphase transition. Promotes cortical granule exocytosis after oocyte fertilization during the first meiotic anaphase. Essential for embryonic cytokinesis by regulating rab-11-positive vesicle trafficking at the plasma membrane at the cleavage furrow and midbody. Regulates centriole segregation during spermatocyte meiosis. Required for embryonic anterior-posterior axis formation. This Caenorhabditis elegans protein is Separin homolog sep-1.